A 667-amino-acid polypeptide reads, in one-letter code: DNA ligase (667 aa).

NAD(+) contacts are provided by residues 32–36 (DKDYD) and 80–81 (SL). Lysine 121 (N6-AMP-lysine intermediate) is an active-site residue. Residues arginine 143, glutamate 178, and lysine 314 each contribute to the NAD(+) site. Positions 407, 410, 423, and 429 each coordinate Zn(2+). One can recognise a BRCT domain in the interval 587–667 (IVESIFKDKT…EFEKMLGRES (81 aa)).

The protein belongs to the NAD-dependent DNA ligase family. LigA subfamily. The cofactor is Mg(2+). Mn(2+) is required as a cofactor.

The catalysed reaction is NAD(+) + (deoxyribonucleotide)n-3'-hydroxyl + 5'-phospho-(deoxyribonucleotide)m = (deoxyribonucleotide)n+m + AMP + beta-nicotinamide D-nucleotide.. Its function is as follows. DNA ligase that catalyzes the formation of phosphodiester linkages between 5'-phosphoryl and 3'-hydroxyl groups in double-stranded DNA using NAD as a coenzyme and as the energy source for the reaction. It is essential for DNA replication and repair of damaged DNA. The sequence is that of DNA ligase from Clostridium botulinum (strain Eklund 17B / Type B).